The following is a 150-amino-acid chain: 3-dehydroquinate dehydratase (150 aa).

Tyrosine 26 (proton acceptor) is an active-site residue. Positions 77, 83, and 90 each coordinate substrate. Residue histidine 103 is the Proton donor of the active site. Residues 104-105 (LS) and arginine 114 each bind substrate.

It belongs to the type-II 3-dehydroquinase family. Homododecamer.

The enzyme catalyses 3-dehydroquinate = 3-dehydroshikimate + H2O. The protein operates within metabolic intermediate biosynthesis; chorismate biosynthesis; chorismate from D-erythrose 4-phosphate and phosphoenolpyruvate: step 3/7. Catalyzes a trans-dehydration via an enolate intermediate. This Mannheimia succiniciproducens (strain KCTC 0769BP / MBEL55E) protein is 3-dehydroquinate dehydratase.